Consider the following 945-residue polypeptide: Isoleucine--tRNA ligase (945 aa).

The 'HIGH' region motif lies at 66–76 (PYANGDIHLGH). E581 contacts L-isoleucyl-5'-AMP. The 'KMSKS' region signature appears at 622–626 (KMSKS). Position 625 (K625) interacts with ATP. Residues C908, C911, C928, and C931 each coordinate Zn(2+).

Belongs to the class-I aminoacyl-tRNA synthetase family. IleS type 1 subfamily. As to quaternary structure, monomer. Zn(2+) serves as cofactor.

It localises to the cytoplasm. The catalysed reaction is tRNA(Ile) + L-isoleucine + ATP = L-isoleucyl-tRNA(Ile) + AMP + diphosphate. Functionally, catalyzes the attachment of isoleucine to tRNA(Ile). As IleRS can inadvertently accommodate and process structurally similar amino acids such as valine, to avoid such errors it has two additional distinct tRNA(Ile)-dependent editing activities. One activity is designated as 'pretransfer' editing and involves the hydrolysis of activated Val-AMP. The other activity is designated 'posttransfer' editing and involves deacylation of mischarged Val-tRNA(Ile). The chain is Isoleucine--tRNA ligase from Burkholderia cenocepacia (strain ATCC BAA-245 / DSM 16553 / LMG 16656 / NCTC 13227 / J2315 / CF5610) (Burkholderia cepacia (strain J2315)).